A 335-amino-acid polypeptide reads, in one-letter code: Glucokinase (335 aa).

11 to 16 provides a ligand contact to ATP; the sequence is ADIGGT.

Belongs to the bacterial glucokinase family.

It localises to the cytoplasm. It carries out the reaction D-glucose + ATP = D-glucose 6-phosphate + ADP + H(+). The sequence is that of Glucokinase from Xanthomonas axonopodis pv. citri (strain 306).